Consider the following 282-residue polypeptide: Pantothenate synthetase (282 aa).

30–37 (MGYLHEGH) provides a ligand contact to ATP. Residue His-37 is the Proton donor of the active site. Gln-61 is a binding site for (R)-pantoate. Gln-61 contacts beta-alanine. An ATP-binding site is contributed by 147–150 (GMKD). Gln-153 serves as a coordination point for (R)-pantoate. ATP contacts are provided by residues Val-176 and 184 to 187 (KSSR).

The protein belongs to the pantothenate synthetase family. Homodimer.

Its subcellular location is the cytoplasm. It carries out the reaction (R)-pantoate + beta-alanine + ATP = (R)-pantothenate + AMP + diphosphate + H(+). It functions in the pathway cofactor biosynthesis; (R)-pantothenate biosynthesis; (R)-pantothenate from (R)-pantoate and beta-alanine: step 1/1. Its function is as follows. Catalyzes the condensation of pantoate with beta-alanine in an ATP-dependent reaction via a pantoyl-adenylate intermediate. In Bacillus thuringiensis subsp. konkukian (strain 97-27), this protein is Pantothenate synthetase.